The following is a 119-amino-acid chain: Ribonuclease P protein component (119 aa).

Belongs to the RnpA family. In terms of assembly, consists of a catalytic RNA component (M1 or rnpB) and a protein subunit.

The enzyme catalyses Endonucleolytic cleavage of RNA, removing 5'-extranucleotides from tRNA precursor.. In terms of biological role, RNaseP catalyzes the removal of the 5'-leader sequence from pre-tRNA to produce the mature 5'-terminus. It can also cleave other RNA substrates such as 4.5S RNA. The protein component plays an auxiliary but essential role in vivo by binding to the 5'-leader sequence and broadening the substrate specificity of the ribozyme. The protein is Ribonuclease P protein component of Streptococcus equi subsp. zooepidemicus (strain MGCS10565).